Here is a 354-residue protein sequence, read N- to C-terminus: CREB/ATF bZIP transcription factor (354 aa).

3 disordered regions span residues 1–95 (MRHS…PGEE), 113–156 (PRQP…AAEM), and 171–214 (GGCS…RKAA). Serine 50 bears the Phosphoserine mark. Residues 121–132 (DPGLSSPGPLSS) are compositionally biased toward low complexity. 2 stretches are compositionally biased toward gly residues: residues 133–143 (SGGGSDSGGLW) and 190–199 (PGGGGGGGSG). One can recognise a bZIP domain in the interval 204–267 (QAATKSPRKA…QALQEESRYL (64 aa)). The segment covering 205 to 214 (AATKSPRKAA) has biased composition (low complexity). The tract at residues 219-226 (RLNRLKKK) is basic motif. The leucine-zipper stretch occupies residues 232-267 (LESRVRGLAAENQELRAENRELGKRVQALQEESRYL). The HCFC1-binding motif (HBM) motif lies at 303–306 (DHDY).

Belongs to the bZIP family. ATF subfamily. In terms of assembly, interacts with HCFC1; the interaction inhibits CREB3 transcriptional activity. Interacts with CREB3; the interaction occurs only in combination with HCFC1. As to expression, in adults, expressed most abundantly in heart, liver and skeletal muscle, moderately abundant in kidney and pancreas, and barely detectable in lung. In fetal tissues, expressed most abundantly in kidney and very low amounts in heart, lung and liver.

The protein localises to the nucleus. In terms of biological role, strongly activates transcription when bound to HCFC1. Suppresses the expression of HSV proteins in cells infected with the virus in a HCFC1-dependent manner. Also suppresses the HCFC1-dependent transcriptional activation by CREB3 and reduces the amount of CREB3 in the cell. Able to down-regulate expression of some cellular genes in CREBZF-expressing cells. This chain is CREB/ATF bZIP transcription factor (CREBZF), found in Homo sapiens (Human).